We begin with the raw amino-acid sequence, 234 residues long: Endonuclease NucS (234 aa).

It belongs to the NucS endonuclease family.

It is found in the cytoplasm. In terms of biological role, cleaves both 3' and 5' ssDNA extremities of branched DNA structures. In Bifidobacterium adolescentis (strain ATCC 15703 / DSM 20083 / NCTC 11814 / E194a), this protein is Endonuclease NucS.